A 478-amino-acid polypeptide reads, in one-letter code: Aspartyl/glutamyl-tRNA(Asn/Gln) amidotransferase subunit B (478 aa).

This sequence belongs to the GatB/GatE family. GatB subfamily. Heterotrimer of A, B and C subunits.

It catalyses the reaction L-glutamyl-tRNA(Gln) + L-glutamine + ATP + H2O = L-glutaminyl-tRNA(Gln) + L-glutamate + ADP + phosphate + H(+). The catalysed reaction is L-aspartyl-tRNA(Asn) + L-glutamine + ATP + H2O = L-asparaginyl-tRNA(Asn) + L-glutamate + ADP + phosphate + 2 H(+). Allows the formation of correctly charged Asn-tRNA(Asn) or Gln-tRNA(Gln) through the transamidation of misacylated Asp-tRNA(Asn) or Glu-tRNA(Gln) in organisms which lack either or both of asparaginyl-tRNA or glutaminyl-tRNA synthetases. The reaction takes place in the presence of glutamine and ATP through an activated phospho-Asp-tRNA(Asn) or phospho-Glu-tRNA(Gln). This is Aspartyl/glutamyl-tRNA(Asn/Gln) amidotransferase subunit B from Pseudothermotoga lettingae (strain ATCC BAA-301 / DSM 14385 / NBRC 107922 / TMO) (Thermotoga lettingae).